We begin with the raw amino-acid sequence, 158 residues long: MKMKCFAKNALAVTTLMIAACGMANASTVINSKDVSGEVTVKQGNTFHVDFAPNTGEIFAGKQPGDVTMFTLTMGDTAPHGGWRLIPTGDSKGGYMISADGDYVGLYSYMMSWVGIDNNWYINDDSPKDIKDHLYVKAGTVLKPTTYKFTGRVEEYVF.

Positions 1-26 are cleaved as a signal peptide; it reads MKMKCFAKNALAVTTLMIAACGMANA.

As to quaternary structure, forms a homomer composed of subunits assembled in a large structure.

The protein localises to the fimbrium. In terms of biological role, fibrillar structure, part of fimbriae, necessary for full virulence. The protein is pH 6 antigen (psaA) of Yersinia pestis.